The following is a 185-amino-acid chain: ATP synthase subunit delta (185 aa).

It belongs to the ATPase delta chain family. As to quaternary structure, F-type ATPases have 2 components, F(1) - the catalytic core - and F(0) - the membrane proton channel. F(1) has five subunits: alpha(3), beta(3), gamma(1), delta(1), epsilon(1). CF(0) has four main subunits: a(1), b(1), b'(1) and c(10-14). The alpha and beta chains form an alternating ring which encloses part of the gamma chain. F(1) is attached to F(0) by a central stalk formed by the gamma and epsilon chains, while a peripheral stalk is formed by the delta, b and b' chains.

The protein localises to the cellular thylakoid membrane. In terms of biological role, f(1)F(0) ATP synthase produces ATP from ADP in the presence of a proton or sodium gradient. F-type ATPases consist of two structural domains, F(1) containing the extramembraneous catalytic core and F(0) containing the membrane proton channel, linked together by a central stalk and a peripheral stalk. During catalysis, ATP synthesis in the catalytic domain of F(1) is coupled via a rotary mechanism of the central stalk subunits to proton translocation. Functionally, this protein is part of the stalk that links CF(0) to CF(1). It either transmits conformational changes from CF(0) to CF(1) or is implicated in proton conduction. In Acaryochloris marina (strain MBIC 11017), this protein is ATP synthase subunit delta.